The following is a 217-amino-acid chain: RING-H2 finger protein ATL40 (217 aa).

The chain crosses the membrane as a helical span at residues 28-48 (IFLVTTVSFSIIIIIVFVYYL). The RING-type; atypical zinc-finger motif lies at 100–142 (CAVCLSLLEEKDNARMLPNCKHVFHVSCVDTWLTTQSTCPVCR). Basic and acidic residues-rich tracts occupy residues 143-160 (TEAEPSHPRLEPEPREGP) and 186-217 (DSFRRILTRERSSNRRDHSRVDQDRELDIERQ). A disordered region spans residues 143 to 217 (TEAEPSHPRL…QDRELDIERQ (75 aa)).

This sequence belongs to the RING-type zinc finger family. ATL subfamily.

The protein localises to the membrane. It catalyses the reaction S-ubiquitinyl-[E2 ubiquitin-conjugating enzyme]-L-cysteine + [acceptor protein]-L-lysine = [E2 ubiquitin-conjugating enzyme]-L-cysteine + N(6)-ubiquitinyl-[acceptor protein]-L-lysine.. Its pathway is protein modification; protein ubiquitination. This Arabidopsis thaliana (Mouse-ear cress) protein is RING-H2 finger protein ATL40 (ATL40).